Consider the following 200-residue polypeptide: Small ribosomal subunit protein eS1 (200 aa).

This sequence belongs to the eukaryotic ribosomal protein eS1 family.

The chain is Small ribosomal subunit protein eS1 from Thermococcus gammatolerans (strain DSM 15229 / JCM 11827 / EJ3).